A 337-amino-acid chain; its full sequence is MASIHRPKRGSLAFSPRKRAKSHIPRFRAWPEATGEPRLQGFAGYKVGMTHVIMVDDTKNSLTQGMEISVPVTIIETPAIRVAAIRAYAEDTAGEKAIAEVWATDLDPELKRRIPVPKGDNMAETLGNIGKMIEEGKVSDIRAVTYTLPKSLTGVPKKTPDIMESGISARDLNTKFEYAKSILGTLVSITDVFKTGTLIDTAAITIGKGTQGPAKRWGIQLMKGKHSRQGSLRQIGTLGGFGLRRVSWRVPQMGQTGYHQRTEFNKRILKIGSDGEEVTPEGGFINYGLVRGDYVLIKGSVPGPSKRLIRLRDPIRAKKADLGEPNILHISRESKQG.

Residues 1–20 (MASIHRPKRGSLAFSPRKRA) are disordered.

The protein belongs to the universal ribosomal protein uL3 family. In terms of assembly, part of the 50S ribosomal subunit. Forms a cluster with proteins L14 and L24e.

Its function is as follows. One of the primary rRNA binding proteins, it binds directly near the 3'-end of the 23S rRNA, where it nucleates assembly of the 50S subunit. The polypeptide is Large ribosomal subunit protein uL3 (Methanosarcina barkeri (strain Fusaro / DSM 804)).